We begin with the raw amino-acid sequence, 343 residues long: N-acetyl-gamma-glutamyl-phosphate reductase (343 aa).

Residue Cys-147 is part of the active site.

The protein belongs to the NAGSA dehydrogenase family. Type 1 subfamily.

The protein localises to the cytoplasm. It carries out the reaction N-acetyl-L-glutamate 5-semialdehyde + phosphate + NADP(+) = N-acetyl-L-glutamyl 5-phosphate + NADPH + H(+). It functions in the pathway amino-acid biosynthesis; L-arginine biosynthesis; N(2)-acetyl-L-ornithine from L-glutamate: step 3/4. Its function is as follows. Catalyzes the NADPH-dependent reduction of N-acetyl-5-glutamyl phosphate to yield N-acetyl-L-glutamate 5-semialdehyde. The polypeptide is N-acetyl-gamma-glutamyl-phosphate reductase (Listeria welshimeri serovar 6b (strain ATCC 35897 / DSM 20650 / CCUG 15529 / CIP 8149 / NCTC 11857 / SLCC 5334 / V8)).